We begin with the raw amino-acid sequence, 502 residues long: UPF0371 protein CTC_00401 (502 aa).

Belongs to the UPF0371 family.

This is UPF0371 protein CTC_00401 from Clostridium tetani (strain Massachusetts / E88).